The primary structure comprises 981 residues: MDTFKRWLNKPKADDKSLLARFFHADRSLTAVASELDSFDGRAEPDRCTRLVSRLRQNQDKVLAITNLIMEELLGEDRDPRAFRAKFPEEVLQENLAGQLWFGAECLAAGSSIMNRETESKEMRPLAQAVTKSLGNVRVLLRDQCLKNNVPNSKTLHLDLNDSTTEQLYESLKIFDRLFAEFELSYVSAMVQVKSRHEYEMQQWIGVLFSETLQRALKIGLLDQEMVDAFDPGLMFSIPRLAIVAGLVVYAKGPLNMDMPGDQLSEMFRPFRTILIKIRDLLRNLNNQELYQLEKLLCTNEDINTKVPLGSSSIEAPSPEHSAHPTTSSSQNNNNSSNNNHSSSSTTTTTMGTTNTHRTVERLVDQRNNNHNSNSNSSTNPTVEGATLRSPSMLSLSATSTPTASPAPSPTPSHSIDSTSSAATSSTNPPADWSDGDDEDEDDDDIEVDEEDLESSDDDTDEEQLLKDIVAADCASGYLIPNTNLGNLLQPQEVPLTDNFVASEDDEYGTAEQQGHQGLEEEEPSTSAAMLAATRTLQRLRLPSSDTEPLAEPTTIKATEEQMQQPNGRHQESHSHSHRHHQRHHHHHHHRHSHQHRQPHPHRTTRSGRKRCSLEVADPETIQPEREQNLASGDTSAASSLSDDVSLAMRNTTARLKFKSTENLLHRLFVCIAGVADQLQTNFASDLRQILRSVFLMNMSSAQEEIDIPEKTKESELFEFRASENDVIQESAGSNQSIYSAEEVNPELDNVFSAGGGNQATGQRHSAGASMQRNNTIDLASQSGEGSPSGATMSTSRSHVTRSRSLGDQEAASSATSSTAQLRQQEQQQQLQIQLQRQRNNSVGSNTPSSASSTSSSSEQNSPVSARSGSRRRLQSNNETQMPSSATSTSATLSPPAWIPDGKAPRCMACQTPFTAFRRRHHCRNCGGVFCGVCSNASAPLPKYGLTKAVRVCRDCYVREVRSGMGVQGVQRVQSVQASAS.

The segment at 308 to 462 (PLGSSSIEAP…LESSDDDTDE (155 aa)) is disordered. 4 stretches are compositionally biased toward low complexity: residues 326–356 (TTSS…TTNT), 369–380 (NNHNSNSNSSTN), 390–404 (SPSM…TPTA), and 412–433 (PSHS…PADW). Positions 434-462 (SDGDDEDEDDDDIEVDEEDLESSDDDTDE) are enriched in acidic residues. Phosphoserine is present on residues Ser544 and Ser545. Disordered regions lie at residues 561–642 (EQMQ…SSLS) and 749–897 (DNVF…SPPA). Residues 576–611 (HSHRHHQRHHHHHHHRHSHQHRQPHPHRTTRSGRKR) are compositionally biased toward basic residues. Residues 630-642 (LASGDTSAASSLS) are compositionally biased toward low complexity. Residues 760-791 (ATGQRHSAGASMQRNNTIDLASQSGEGSPSGA) are compositionally biased toward polar residues. A Phosphoserine modification is found at Ser805. Low complexity-rich tracts occupy residues 811-866 (AASS…PVSA) and 883-896 (PSSA…LSPP). The segment at 901 to 961 (DGKAPRCMAC…VCRDCYVREV (61 aa)) adopts an FYVE-type zinc-finger fold. Zn(2+)-binding residues include Cys907, Cys910, Cys923, Cys926, Cys931, Cys934, Cys953, and Cys956.

Belongs to the lst-2 family.

Functionally, negative regulator of epidermal growth factor receptor (EGFR) signaling. This chain is Lateral signaling target protein 2 homolog, found in Drosophila erecta (Fruit fly).